A 262-amino-acid polypeptide reads, in one-letter code: Phosphonates import ATP-binding protein PhnC 3 (262 aa).

In terms of domain architecture, ABC transporter spans 3–245; sequence IQLECLSVTY…ELNRIYGNAE (243 aa). 36–43 contributes to the ATP binding site; that stretch reads GASGSGKS.

The protein belongs to the ABC transporter superfamily. Phosphonates importer (TC 3.A.1.9.1) family. The complex is composed of two ATP-binding proteins (PhnC), two transmembrane proteins (PhnE) and a solute-binding protein (PhnD).

The protein resides in the cell inner membrane. It carries out the reaction phosphonate(out) + ATP + H2O = phosphonate(in) + ADP + phosphate + H(+). Its function is as follows. Part of the ABC transporter complex PhnCDE involved in phosphonates import. Responsible for energy coupling to the transport system. In Nostoc sp. (strain PCC 7120 / SAG 25.82 / UTEX 2576), this protein is Phosphonates import ATP-binding protein PhnC 3.